The following is a 147-amino-acid chain: Myoglobin (147 aa).

A Globin domain is found at 2–141 (ADFDMVLKCW…IITDMEADYK (140 aa)). His-60 is a nitrite binding site. Residue His-60 coordinates O2. His-89 provides a ligand contact to heme b.

Belongs to the globin family. In terms of assembly, monomeric.

Its subcellular location is the cytoplasm. It localises to the sarcoplasm. The enzyme catalyses Fe(III)-heme b-[protein] + nitric oxide + H2O = Fe(II)-heme b-[protein] + nitrite + 2 H(+). It carries out the reaction H2O2 + AH2 = A + 2 H2O. Its function is as follows. Monomeric heme protein which primary function is to store oxygen and facilitate its diffusion within muscle tissues. Reversibly binds oxygen through a pentacoordinated heme iron and enables its timely and efficient release as needed during periods of heightened demand. Depending on the oxidative conditions of tissues and cells, and in addition to its ability to bind oxygen, it also has a nitrite reductase activity whereby it regulates the production of bioactive nitric oxide. Under stress conditions, like hypoxia and anoxia, it also protects cells against reactive oxygen species thanks to its pseudoperoxidase activity. The polypeptide is Myoglobin (mb) (Channichthys rhinoceratus (Unicorn icefish)).